Reading from the N-terminus, the 226-residue chain is PKHD-type hydroxylase PST_0995 (226 aa).

One can recognise a Fe2OG dioxygenase domain in the interval 78–178; the sequence is KVFPPLFNCY…RLASFFWIQS (101 aa). Fe cation contacts are provided by His96, Asp98, and His159. Arg169 is a binding site for 2-oxoglutarate.

Requires Fe(2+) as cofactor. L-ascorbate serves as cofactor.

This is PKHD-type hydroxylase PST_0995 from Stutzerimonas stutzeri (strain A1501) (Pseudomonas stutzeri).